Here is a 95-residue protein sequence, read N- to C-terminus: Membrane protein insertion and folding monitor (95 aa).

The helical transmembrane segment at 12-32 threads the bilayer; it reads LFLVDFFTIILPALTAIGIAF. A crucial for elongation arrest region spans residues 86–89; that stretch reads DEED.

Its subcellular location is the cell membrane. Its function is as follows. Sensor protein that up-regulates translation of the secondary membrane protein insertase (MisCB/YqjG) when activity of the primary membrane protein insertase (MisCA/SpoIIIJ) is limited. Acts as a ribosome-nascent chain complex. When the primary membrane protein insertase activity or level is reduced, the membrane insertion of MifM is impaired, which induces arrest of MifM translation and unfolding of the mRNA hairpin. Unfolding leads to translation of the downstream gene, which encodes the secondary membrane protein insertase MisCB/YqjG. Translation arrest of MifM is mediated by interaction of its C-terminal domain with the ribosomal polypeptide exit tunnel. Undergoes multisite stalling, which may allow a sufficient duration of ribosomal stalling and consequently sufficient levels of MisCB/YqjG. This chain is Membrane protein insertion and folding monitor (mifM), found in Bacillus subtilis (strain 168).